The primary structure comprises 118 residues: Small ribosomal subunit protein uS13 (118 aa).

The disordered stretch occupies residues 95–118 (LPVRGQRTRTNARTRKGPKKLINK).

It belongs to the universal ribosomal protein uS13 family. In terms of assembly, part of the 30S ribosomal subunit. Forms a loose heterodimer with protein S19. Forms two bridges to the 50S subunit in the 70S ribosome.

Functionally, located at the top of the head of the 30S subunit, it contacts several helices of the 16S rRNA. In the 70S ribosome it contacts the 23S rRNA (bridge B1a) and protein L5 of the 50S subunit (bridge B1b), connecting the 2 subunits; these bridges are implicated in subunit movement. Contacts the tRNAs in the A and P-sites. This is Small ribosomal subunit protein uS13 from Blochmanniella floridana.